The primary structure comprises 583 residues: Tetratricopeptide repeat protein 39C (583 aa).

The segment at 1 to 22 (MAGSEQQRPRRRDDGDSDAAAA) is disordered. TPR repeat units follow at residues 315–348 (SLFM…AVDQ), 353–386 (HVCL…SRWS), and 485–518 (GLKY…ELCR).

This sequence belongs to the TTC39 family.

This is Tetratricopeptide repeat protein 39C (TTC39C) from Homo sapiens (Human).